Consider the following 196-residue polypeptide: Probable peptidyl-prolyl cis-trans isomerase (196 aa).

A signal peptide spans Met1–Ala26. The PPIase cyclophilin-type domain maps to Pro29–Asp194.

It belongs to the cyclophilin-type PPIase family.

The protein localises to the periplasm. It carries out the reaction [protein]-peptidylproline (omega=180) = [protein]-peptidylproline (omega=0). In terms of biological role, PPIases accelerate the folding of proteins. It catalyzes the cis-trans isomerization of proline imidic peptide bonds in oligopeptides. This is Probable peptidyl-prolyl cis-trans isomerase (ppi) from Brucella abortus (strain 2308).